Consider the following 89-residue polypeptide: UPF0297 protein OB2008 (89 aa).

Belongs to the UPF0297 family.

This is UPF0297 protein OB2008 from Oceanobacillus iheyensis (strain DSM 14371 / CIP 107618 / JCM 11309 / KCTC 3954 / HTE831).